The chain runs to 199 residues: UPF0316 protein LA_0606 (199 aa).

The next 2 helical transmembrane spans lie at 47–67 (IAAS…TQVI) and 73–93 (VFCY…GMIL).

The protein belongs to the UPF0316 family.

Its subcellular location is the cell membrane. This is UPF0316 protein LA_0606 from Leptospira interrogans serogroup Icterohaemorrhagiae serovar Lai (strain 56601).